A 131-amino-acid polypeptide reads, in one-letter code: Ribosome-binding factor A (131 aa).

The protein belongs to the RbfA family. Monomer. Binds 30S ribosomal subunits, but not 50S ribosomal subunits or 70S ribosomes.

It localises to the cytoplasm. Functionally, one of several proteins that assist in the late maturation steps of the functional core of the 30S ribosomal subunit. Associates with free 30S ribosomal subunits (but not with 30S subunits that are part of 70S ribosomes or polysomes). Required for efficient processing of 16S rRNA. May interact with the 5'-terminal helix region of 16S rRNA. The protein is Ribosome-binding factor A of Protochlamydia amoebophila (strain UWE25).